The chain runs to 231 residues: Small ribosomal subunit protein uS3 (231 aa).

The 69-residue stretch at 38–106 (IRVYLKNRLK…KTFVNIMEIK (69 aa)) folds into the KH type-2 domain.

The protein belongs to the universal ribosomal protein uS3 family. Part of the 30S ribosomal subunit. Forms a tight complex with proteins S10 and S14.

Its function is as follows. Binds the lower part of the 30S subunit head. Binds mRNA in the 70S ribosome, positioning it for translation. The sequence is that of Small ribosomal subunit protein uS3 from Endomicrobium trichonymphae.